We begin with the raw amino-acid sequence, 92 residues long: Elongation factor 1-beta (92 aa).

It belongs to the EF-1-beta/EF-1-delta family.

Its function is as follows. Promotes the exchange of GDP for GTP in EF-1-alpha/GDP, thus allowing the regeneration of EF-1-alpha/GTP that could then be used to form the ternary complex EF-1-alpha/GTP/AAtRNA. The sequence is that of Elongation factor 1-beta (ef1b) from Pyrobaculum aerophilum (strain ATCC 51768 / DSM 7523 / JCM 9630 / CIP 104966 / NBRC 100827 / IM2).